The chain runs to 240 residues: T-cell antigen CD7 (240 aa).

An N-terminal signal peptide occupies residues 1–25; it reads MAGPPRLLLLPLLLALARGLPGALA. Residues 26–130 enclose the Ig-like domain; the sequence is AQEVQQSPHC…NVYGSGTLVL (105 aa). Topologically, residues 26–180 are extracellular; it reads AQEVQQSPHC…PDPPAASALP (155 aa). 2 cysteine pairs are disulfide-bonded: C35/C142 and C48/C114. N45 and N96 each carry an N-linked (GlcNAc...) asparagine glycan. The segment at 140 to 172 is disordered; it reads HRCSDAPPRASALPAPPTGSALPDPQTASALPD. 4 repeat units span residues 145-153, 154-162, 163-171, and 172-180. Residues 145-180 are 4 X 9 AA tandem repeats, potential spacer function; the sequence is APPRASALPAPPTGSALPDPQTASALPDPPAASALP. The helical transmembrane segment at 181-201 threads the bilayer; sequence AALAVISFLLGLGLGVACVLA. Residue C198 is the site of S-palmitoyl cysteine attachment. Residues 202 to 240 are Cytoplasmic-facing; the sequence is RTQIKKLCSWRDKNSAACVVYEDMSHSRCNTLSSPNQYQ.

As to quaternary structure, interacts with SECTM1. As to expression, expressed on T-cells and natural killer (NK) cells and their precursors.

It localises to the membrane. Functionally, transmembrane glycoprotein expressed by T-cells and natural killer (NK) cells and their precursors. Plays a costimulatory role in T-cell activation upon binding to its ligand K12/SECTM1. In turn, mediates the production of cytokines such as IL-2. On resting NK-cells, CD7 activation results in a significant induction of interferon-gamma levels. The polypeptide is T-cell antigen CD7 (CD7) (Homo sapiens (Human)).